The sequence spans 218 residues: Oxidoreductase claN (218 aa).

3 residues coordinate NADP(+): lysine 38, aspartate 57, and asparagine 82. The active-site Proton donor is the serine 134. NADP(+) is bound by residues tyrosine 148, lysine 152, and threonine 183. The active-site Proton acceptor is tyrosine 148. Catalysis depends on lysine 152, which acts as the Lowers pKa of active site Tyr.

Belongs to the short-chain dehydrogenases/reductases (SDR) family.

Its pathway is pigment biosynthesis. In terms of biological role, oxidoreductase; part of the gene cluster that mediates the biosynthesis of the bianthraquinone cladofulvin, a conidial pigment not required for virulence but that plays a role in fitness and resistance to environmental stresses including UV light and low-temperature stress. The pathway begins with the synthesis of atrochrysone thioester by the polyketide synthase (PKS) claG. The atrochrysone carboxyl ACP thioesterase claF then breaks the thioester bond and releases the atrochrysone carboxylic acid from claG. This compound is decarboxylated by claH to yield emodin, which is further converted to chrysophanol hydroquinone by the reductase claC and the dehydratase claB. The cytochrome P450 monooxygenase claM then catalyzes the dimerization of nataloe-emodin to cladofulvin. The sequence is that of Oxidoreductase claN from Passalora fulva (Tomato leaf mold).